The following is a 177-amino-acid chain: Protein GrpE (177 aa).

This sequence belongs to the GrpE family. Homodimer. K(+) is required as a cofactor.

Its subcellular location is the cytoplasm. Participates actively in the response to hyperosmotic and heat shock by preventing the aggregation of stress-denatured proteins, in association with DnaK and GrpE. It is the nucleotide exchange factor for DnaK and may function as a thermosensor. Unfolded proteins bind initially to DnaJ; upon interaction with the DnaJ-bound protein, DnaK hydrolyzes its bound ATP, resulting in the formation of a stable complex. GrpE releases ADP from DnaK; ATP binding to DnaK triggers the release of the substrate protein, thus completing the reaction cycle. Several rounds of ATP-dependent interactions between DnaJ, DnaK and GrpE are required for fully efficient folding. This chain is Protein GrpE, found in Thermus thermophilus (strain ATCC 27634 / DSM 579 / HB8).